A 179-amino-acid polypeptide reads, in one-letter code: ATP synthase subunit delta (179 aa).

This sequence belongs to the ATPase delta chain family. In terms of assembly, F-type ATPases have 2 components, F(1) - the catalytic core - and F(0) - the membrane proton channel. F(1) has five subunits: alpha(3), beta(3), gamma(1), delta(1), epsilon(1). F(0) has three main subunits: a(1), b(2) and c(10-14). The alpha and beta chains form an alternating ring which encloses part of the gamma chain. F(1) is attached to F(0) by a central stalk formed by the gamma and epsilon chains, while a peripheral stalk is formed by the delta and b chains.

The protein resides in the cell membrane. Its function is as follows. F(1)F(0) ATP synthase produces ATP from ADP in the presence of a proton or sodium gradient. F-type ATPases consist of two structural domains, F(1) containing the extramembraneous catalytic core and F(0) containing the membrane proton channel, linked together by a central stalk and a peripheral stalk. During catalysis, ATP synthesis in the catalytic domain of F(1) is coupled via a rotary mechanism of the central stalk subunits to proton translocation. In terms of biological role, this protein is part of the stalk that links CF(0) to CF(1). It either transmits conformational changes from CF(0) to CF(1) or is implicated in proton conduction. This is ATP synthase subunit delta from Staphylococcus aureus (strain Mu50 / ATCC 700699).